The following is a 147-amino-acid chain: uncharacterized protein (147 aa).

2 consecutive transmembrane segments (helical) span residues 35–55 and 62–82; these read TIQLAGWISVLFMLGYNFGNH and IWLLVITALLVIGLLIHLFEP.

In terms of assembly, has been detected in a cytochrome bc1-aa3 supercomplex; its deletion however leaves complex activity unaffected.

Its subcellular location is the cell membrane. This is an uncharacterized protein from Corynebacterium glutamicum (strain ATCC 13032 / DSM 20300 / JCM 1318 / BCRC 11384 / CCUG 27702 / LMG 3730 / NBRC 12168 / NCIMB 10025 / NRRL B-2784 / 534).